A 208-amino-acid chain; its full sequence is MGRGKIEIKRIENANNRVVTFSKRRNGLVKKAKEITVLCDAKVALIIFASNGKMIDYCCPSMDLGAMLDQYQKLSGKKLWDAKHENLSNEIDRIKKENDSLQLELRHLKGEDIQSLNLKNLMAVEHAIEHGLDKVRDHQMEILISKRRNEKMMAEEQRQLTFQLQQQEMAIASNARGMMMRDHDGQFGYRVQPIQPNLQEKIMSLVID.

The 55-residue stretch at 3–57 folds into the MADS-box domain; the sequence is RGKIEIKRIENANNRVVTFSKRRNGLVKKAKEITVLCDAKVALIIFASNGKMIDY. Residues 75-117 adopt a coiled-coil conformation; it reads SGKKLWDAKHENLSNEIDRIKKENDSLQLELRHLKGEDIQSLN. A K-box domain is found at 84-170; the sequence is HENLSNEIDR…TFQLQQQEMA (87 aa).

In terms of assembly, forms a heterodimer with APETALA3, capable of binding to CArG-box sequences. AP3/PI heterodimer binds AP1 or SEP3 to form a ternary complex.

It is found in the nucleus. Functionally, probable transcription factor involved in the genetic control of flower development. Is required for normal development of petals and stamens in the wild-type flower. Forms a heterodimer with APETALA3 that is required for autoregulation of both AP3 and PI genes. AP3/PI heterodimer interacts with APETALA1 or SEPALLATA3 to form a ternary complex that could be responsible for the regulation of the genes involved in the flower development. AP3/PI heterodimer activates the expression of NAP. AP3/PI prevents GATA22/GNL and GATA21/GNC expression. This chain is Floral homeotic protein PISTILLATA (PI), found in Arabidopsis thaliana (Mouse-ear cress).